The primary structure comprises 413 residues: Putative competence-damage inducible protein (413 aa).

Belongs to the CinA family.

This Halothermothrix orenii (strain H 168 / OCM 544 / DSM 9562) protein is Putative competence-damage inducible protein.